The following is a 370-amino-acid chain: G-protein coupled receptor homolog K2 (370 aa).

Residues 1–61 are Extracellular-facing; that stretch reads MTSPTNSTML…CTFLEDTKYH (61 aa). 2 N-linked (GlcNAc...) asparagine; by host glycosylation sites follow: asparagine 6 and asparagine 51. Residues 62–82 form a helical membrane-spanning segment; it reads IIVIHIILFLLGSIGNIFVVS. Residues 83 to 94 are Cytoplasmic-facing; it reads LIAFKRNKSITD. Residues 95 to 115 form a helical membrane-spanning segment; the sequence is IYILNLSMSDCIFVFQIPFIV. The Extracellular segment spans residues 116–131; the sequence is YSKLDQWIFGNILCKI. The helical transmembrane segment at 132–152 threads the bilayer; sequence MSVLYYVGFFSNMFIITLMSI. Over 153–171 the chain is Cytoplasmic; sequence DRYFAIVHPIKRQPYRTKR. A helical transmembrane segment spans residues 172–192; that stretch reads IGILMCCSAWLLSLILSSPVS. Over 193-223 the chain is Extracellular; sequence KLYENIPHMSKDIYQCTLTNENDSIIAFIKR. The chain crosses the membrane as a helical span at residues 224–244; it reads LMQIEITILGFLIPIIIFVYC. At 245 to 265 the chain is on the cytoplasmic side; sequence YYRIFTTVVRLRNRRKYKSIK. A helical membrane pass occupies residues 266 to 286; that stretch reads IVLMIVVCSLICWIPLYIVLM. Topologically, residues 287–300 are extracellular; the sequence is IATIVSLYTSNIFR. The helical transmembrane segment at 301 to 321 threads the bilayer; the sequence is HLCLYLNLAYAITFSETISLA. The Cytoplasmic portion of the chain corresponds to 322 to 370; it reads RCCINPIIYTLIGEHVRSRISSICSCIYRDNRIRKKLFSRKSSSSSNII.

This sequence belongs to the G-protein coupled receptor 1 family.

It localises to the host cell membrane. Putative chemokine receptor. This Sus scrofa (Pig) protein is G-protein coupled receptor homolog K2.